Consider the following 430-residue polypeptide: FAD-dependent monooxygenase asL4 (430 aa).

Residues 11–14, 33–34, arginine 108, and tyrosine 278 each bind FAD; these read GGIA and ER.

This sequence belongs to the aromatic-ring hydroxylase family. Requires FAD as cofactor.

Its pathway is secondary metabolite biosynthesis; terpenoid biosynthesis. Its function is as follows. Flavin-dependent monooxygenase; part of the gene cluster that mediates the biosynthesis of xenovulene A, an unusual meroterpenoid that has potent inhibitory effects on the human gamma-aminobutyrate A (GABAA) benzodiazepine receptor. The first step of xenovulene A biosynthesis is the biosynthesis of 3-methylorcinaldehyde performed by the non-reducing polyketide synthase aspks1. The salicylate hydroxylase asL1 then catalyzes the oxidative dearomatization of 3-methylorcinaldehyde to yield a dearomatized hydroxycyclohexadione. The 2-oxoglutarate-dependent dioxygenase asL3 further catalyzes the oxidative ring expansion to provide the first tropolone metabolite. The cytochrome P450 monooxygenase asR2 allows the synthesis of tropolone hemiacetal. In parallel, a previously unrecognised class of terpene cyclase, asR6, produces alpha-humulene from farnesylpyrophosphate (FPP). The putative Diels-Alderase asR5 probably catalyzes the formation of the tropolone-humulene skeleton by linking humulene and the polyketide moiety. Oxidative-ring contractions catalyzed by asL4 and asL6 then processively remove carbon atoms from the polyketide to yield xenovulene A. In Sarocladium schorii (Acremonium strictum (strain IMI 501407)), this protein is FAD-dependent monooxygenase asL4.